Reading from the N-terminus, the 759-residue chain is LPS-assembly protein LptD (759 aa).

Residues M1–A45 form the signal peptide.

The protein belongs to the LptD family. As to quaternary structure, component of the lipopolysaccharide transport and assembly complex. Interacts with LptE and LptA.

It is found in the cell outer membrane. Functionally, together with LptE, is involved in the assembly of lipopolysaccharide (LPS) at the surface of the outer membrane. The protein is LPS-assembly protein LptD of Pseudoalteromonas atlantica (strain T6c / ATCC BAA-1087).